The sequence spans 283 residues: Pantothenate synthetase (283 aa).

Position 31-38 (31-38 (MGALHEGH)) interacts with ATP. Catalysis depends on histidine 38, which acts as the Proton donor. A (R)-pantoate-binding site is contributed by glutamine 62. Glutamine 62 is a beta-alanine binding site. 148 to 151 (GKKD) is a binding site for ATP. A (R)-pantoate-binding site is contributed by glutamine 154. ATP is bound by residues valine 177 and 185 to 188 (RSSR).

This sequence belongs to the pantothenate synthetase family. As to quaternary structure, homodimer.

The protein resides in the cytoplasm. The catalysed reaction is (R)-pantoate + beta-alanine + ATP = (R)-pantothenate + AMP + diphosphate + H(+). Its pathway is cofactor biosynthesis; (R)-pantothenate biosynthesis; (R)-pantothenate from (R)-pantoate and beta-alanine: step 1/1. Its function is as follows. Catalyzes the condensation of pantoate with beta-alanine in an ATP-dependent reaction via a pantoyl-adenylate intermediate. The chain is Pantothenate synthetase from Staphylococcus haemolyticus (strain JCSC1435).